The sequence spans 400 residues: Subtilisin-like protease CPC735_013700 (400 aa).

An N-terminal signal peptide occupies residues 1 to 19 (MGFVKILSLSLAATAVADA). A propeptide spanning residues 20–116 (ATILSPRYPN…IEPNQIVTIS (97 aa)) is cleaved from the precursor. The Inhibitor I9 domain maps to 36-115 (YIVVMKDGVS…FIEPNQIVTI (80 aa)). In terms of domain architecture, Peptidase S8 spans 126 to 400 (SWGLPRISVK…RKLLYNNSGK (275 aa)). Residues aspartate 161 and histidine 192 each act as charge relay system in the active site. Residue asparagine 252 is glycosylated (N-linked (GlcNAc...) asparagine). The active-site Charge relay system is the serine 346. A glycan (N-linked (GlcNAc...) asparagine) is linked at asparagine 396.

The protein belongs to the peptidase S8 family.

The protein resides in the secreted. Functionally, secreted subtilisin-like serine protease with keratinolytic activity that contributes to pathogenicity. The protein is Subtilisin-like protease CPC735_013700 of Coccidioides posadasii (strain C735) (Valley fever fungus).